A 374-amino-acid chain; its full sequence is DNA replication and repair protein RecF (374 aa).

Residue 34–41 participates in ATP binding; sequence GNNGSGKT.

It belongs to the RecF family.

It localises to the cytoplasm. The RecF protein is involved in DNA metabolism; it is required for DNA replication and normal SOS inducibility. RecF binds preferentially to single-stranded, linear DNA. It also seems to bind ATP. This is DNA replication and repair protein RecF from Allorhizobium ampelinum (strain ATCC BAA-846 / DSM 112012 / S4) (Agrobacterium vitis (strain S4)).